The primary structure comprises 477 residues: Protoporphyrinogen oxidase (477 aa).

FAD is bound by residues 9–14 (GGGISG), Trp42, 57–60 (GPRG), Val257, Ala449, and 454–456 (VAV).

Belongs to the protoporphyrinogen/coproporphyrinogen oxidase family. Protoporphyrinogen oxidase subfamily. Monomer. Homodimer. FAD serves as cofactor. Detected in liver (at protein level).

The protein localises to the mitochondrion inner membrane. The enzyme catalyses protoporphyrinogen IX + 3 O2 = protoporphyrin IX + 3 H2O2. Its pathway is porphyrin-containing compound metabolism; protoporphyrin-IX biosynthesis; protoporphyrin-IX from protoporphyrinogen-IX: step 1/1. Catalyzes the 6-electron oxidation of protoporphyrinogen-IX to form protoporphyrin-IX. This chain is Protoporphyrinogen oxidase (PPOX), found in Bos taurus (Bovine).